Here is a 621-residue protein sequence, read N- to C-terminus: Chaperone protein HtpG (621 aa).

The interval 1–328 is a; substrate-binding; it reads MKQEKKKFDA…SEDLPLNISR (328 aa). Residues 329–544 are b; sequence ESLQHNNVLE…EAAMDIRMER (216 aa). Residues 479–498 form a disordered region; sequence VDQATSSSEEKNKDDKKSDD. The segment covering 486 to 498 has biased composition (basic and acidic residues); it reads SEEKNKDDKKSDD. The interval 545–621 is c; that stretch reads FLIEQKQIAN…LNDIVQKAIL (77 aa).

The protein belongs to the heat shock protein 90 family. Homodimer.

It is found in the cytoplasm. Molecular chaperone. Has ATPase activity. This chain is Chaperone protein HtpG, found in Rickettsia bellii (strain OSU 85-389).